The sequence spans 206 residues: Ribosomal RNA small subunit methyltransferase G (206 aa).

S-adenosyl-L-methionine is bound by residues Gly-71, Phe-76, 125 to 126, and Arg-139; that span reads IE.

The protein belongs to the methyltransferase superfamily. RNA methyltransferase RsmG family.

The protein resides in the cytoplasm. The catalysed reaction is guanosine(527) in 16S rRNA + S-adenosyl-L-methionine = N(7)-methylguanosine(527) in 16S rRNA + S-adenosyl-L-homocysteine. Specifically methylates the N7 position of guanine in position 527 of 16S rRNA. This chain is Ribosomal RNA small subunit methyltransferase G, found in Cereibacter sphaeroides (strain ATCC 17023 / DSM 158 / JCM 6121 / CCUG 31486 / LMG 2827 / NBRC 12203 / NCIMB 8253 / ATH 2.4.1.) (Rhodobacter sphaeroides).